A 407-amino-acid chain; its full sequence is Phosphopentomutase (407 aa).

Asp10, Asp306, His311, Asp347, His348, and His359 together coordinate Mn(2+).

This sequence belongs to the phosphopentomutase family. Mn(2+) serves as cofactor.

The protein localises to the cytoplasm. The catalysed reaction is 2-deoxy-alpha-D-ribose 1-phosphate = 2-deoxy-D-ribose 5-phosphate. It carries out the reaction alpha-D-ribose 1-phosphate = D-ribose 5-phosphate. Its pathway is carbohydrate degradation; 2-deoxy-D-ribose 1-phosphate degradation; D-glyceraldehyde 3-phosphate and acetaldehyde from 2-deoxy-alpha-D-ribose 1-phosphate: step 1/2. Isomerase that catalyzes the conversion of deoxy-ribose 1-phosphate (dRib-1-P) and ribose 1-phosphate (Rib-1-P) to deoxy-ribose 5-phosphate (dRib-5-P) and ribose 5-phosphate (Rib-5-P), respectively. The protein is Phosphopentomutase of Shigella boydii serotype 18 (strain CDC 3083-94 / BS512).